Reading from the N-terminus, the 109-residue chain is Small ribosomal subunit protein bS6 (109 aa).

Belongs to the bacterial ribosomal protein bS6 family.

Functionally, binds together with bS18 to 16S ribosomal RNA. The sequence is that of Small ribosomal subunit protein bS6 from Ehrlichia ruminantium (strain Gardel).